A 252-amino-acid chain; its full sequence is Hydroxyacylglutathione hydrolase (252 aa).

Zn(2+)-binding residues include H54, H56, D58, H59, H111, D128, and H166.

The protein belongs to the metallo-beta-lactamase superfamily. Glyoxalase II family. In terms of assembly, monomer. It depends on Zn(2+) as a cofactor.

It catalyses the reaction an S-(2-hydroxyacyl)glutathione + H2O = a 2-hydroxy carboxylate + glutathione + H(+). It participates in secondary metabolite metabolism; methylglyoxal degradation; (R)-lactate from methylglyoxal: step 2/2. Thiolesterase that catalyzes the hydrolysis of S-D-lactoyl-glutathione to form glutathione and D-lactic acid. This Aliivibrio fischeri (strain ATCC 700601 / ES114) (Vibrio fischeri) protein is Hydroxyacylglutathione hydrolase.